A 178-amino-acid chain; its full sequence is Large ribosomal subunit protein bL25 (178 aa).

Belongs to the bacterial ribosomal protein bL25 family. CTC subfamily. Part of the 50S ribosomal subunit; part of the 5S rRNA/L5/L18/L25 subcomplex. Contacts the 5S rRNA. Binds to the 5S rRNA independently of L5 and L18.

Functionally, this is one of the proteins that binds to the 5S RNA in the ribosome where it forms part of the central protuberance. The sequence is that of Large ribosomal subunit protein bL25 from Nitratiruptor sp. (strain SB155-2).